The primary structure comprises 287 residues: 4-hydroxybenzoate octaprenyltransferase (287 aa).

Transmembrane regions (helical) follow at residues 41-61, 89-109, 133-153, 158-178, 202-224, and 266-286; these read WPLL…GCAM, WEAV…ILPL, FFAI…PMAF, DTVP…SVAY, FGRF…YVWI, and HNNW…LLAG.

The protein belongs to the UbiA prenyltransferase family. Mg(2+) is required as a cofactor.

Its subcellular location is the cell inner membrane. It catalyses the reaction all-trans-octaprenyl diphosphate + 4-hydroxybenzoate = 4-hydroxy-3-(all-trans-octaprenyl)benzoate + diphosphate. It functions in the pathway cofactor biosynthesis; ubiquinone biosynthesis. Its function is as follows. Catalyzes the prenylation of para-hydroxybenzoate (PHB) with an all-trans polyprenyl group. Mediates the second step in the final reaction sequence of ubiquinone-8 (UQ-8) biosynthesis, which is the condensation of the polyisoprenoid side chain with PHB, generating the first membrane-bound Q intermediate 3-octaprenyl-4-hydroxybenzoate. The sequence is that of 4-hydroxybenzoate octaprenyltransferase from Burkholderia cenocepacia (strain HI2424).